Here is a 178-residue protein sequence, read N- to C-terminus: Large ribosomal subunit protein bL25 (178 aa).

This sequence belongs to the bacterial ribosomal protein bL25 family. CTC subfamily. Part of the 50S ribosomal subunit; part of the 5S rRNA/L5/L18/L25 subcomplex. Contacts the 5S rRNA. Binds to the 5S rRNA independently of L5 and L18.

In terms of biological role, this is one of the proteins that binds to the 5S RNA in the ribosome where it forms part of the central protuberance. The sequence is that of Large ribosomal subunit protein bL25 from Helicobacter pylori (strain HPAG1).